We begin with the raw amino-acid sequence, 365 residues long: Peptide chain release factor 2 (365 aa).

N5-methylglutamine is present on glutamine 252.

This sequence belongs to the prokaryotic/mitochondrial release factor family. Post-translationally, methylated by PrmC. Methylation increases the termination efficiency of RF2.

It is found in the cytoplasm. Peptide chain release factor 2 directs the termination of translation in response to the peptide chain termination codons UGA and UAA. This Haemophilus influenzae (strain ATCC 51907 / DSM 11121 / KW20 / Rd) protein is Peptide chain release factor 2 (prfB).